A 447-amino-acid chain; its full sequence is Glutamyl-tRNA reductase (447 aa).

Residues 56-59 (TCNR), Ser119, 124-126 (ETQ), and Gln130 contribute to the substrate site. Residue Cys57 is the Nucleophile of the active site. 201-206 (GLGEMS) is an NADP(+) binding site.

The protein belongs to the glutamyl-tRNA reductase family. Homodimer.

The catalysed reaction is (S)-4-amino-5-oxopentanoate + tRNA(Glu) + NADP(+) = L-glutamyl-tRNA(Glu) + NADPH + H(+). The protein operates within porphyrin-containing compound metabolism; protoporphyrin-IX biosynthesis; 5-aminolevulinate from L-glutamyl-tRNA(Glu): step 1/2. In terms of biological role, catalyzes the NADPH-dependent reduction of glutamyl-tRNA(Glu) to glutamate 1-semialdehyde (GSA). In Helicobacter acinonychis (strain Sheeba), this protein is Glutamyl-tRNA reductase.